Consider the following 152-residue polypeptide: Natriuretic peptides A (152 aa).

Positions 1–24 (MGSSAITTSFLLFVAFQLPGQTGA) are cleaved as a signal peptide. 2 consecutive propeptides follow at residues 25–122 (NPVY…TAPR) and 92–102 (EMGAPSDGDPG). Positions 50 to 108 (MPLEDEAVPSQVLSEQNEEAGAPLSPLSEVPPWDGGRSTQPREMGAPSDGDPGNPPRSV) are disordered. Ser128 bears the Phosphoserine mark. The cysteines at positions 129 and 145 are disulfide-linked. Residues 146–150 (NSFRY) are important for degradation of atrial natriuretic peptide by IDE.

The protein belongs to the natriuretic peptide family. In terms of assembly, homodimer; disulfide-linked antiparallel dimer. Post-translationally, the precursor molecule is proteolytically cleaved by CORIN at Arg-122 to produce the atrial natriuretic peptide. Undergoes further proteolytic cleavage by unknown proteases to give rise to long-acting natriuretic peptide, vessel dilator and kaliuretic peptide. Additional processing gives rise to the auriculin and atriopeptin peptides. In the kidneys, alternative processing by an unknown protease results in the peptide urodilatin. Cleavage by MME initiates degradation of the factor and thereby regulates its activity. Degradation by IDE results in reduced activation of NPR1 (in vitro). During IDE degradation, the resulting products can temporarily stimulate NPR2 to produce cGMP, before the fragments are completely degraded and inactivated by IDE (in vitro). In terms of processing, degraded by IDE. Post-translationally, phosphorylation on Ser-128 decreases vasorelaxant activity.

The protein resides in the secreted. Its subcellular location is the perikaryon. It is found in the cell projection. Its function is as follows. Hormone that plays a key role in mediating cardio-renal homeostasis, and is involved in vascular remodeling and regulating energy metabolism. Acts by specifically binding and stimulating NPR1 to produce cGMP, which in turn activates effector proteins, such as PRKG1, that drive various biological responses. Regulates vasodilation, natriuresis, diuresis and aldosterone synthesis and is therefore essential for regulating blood pressure, controlling the extracellular fluid volume and maintaining the fluid-electrolyte balance. Also involved in inhibiting cardiac remodeling and cardiac hypertrophy by inducing cardiomyocyte apoptosis and attenuating the growth of cardiomyocytes and fibroblasts. Plays a role in female pregnancy by promoting trophoblast invasion and spiral artery remodeling in uterus, and thus prevents pregnancy-induced hypertension. In adipose tissue, acts in various cGMP- and PKG-dependent pathways to regulate lipid metabolism and energy homeostasis. This includes up-regulating lipid metabolism and mitochondrial oxygen utilization by activating the AMP-activated protein kinase (AMPK), and increasing energy expenditure by acting via MAPK11 to promote the UCP1-dependent thermogenesis of brown adipose tissue. Binds the clearance receptor NPR3 which removes the hormone from circulation. May have a role in cardio-renal homeostasis through regulation of natriuresis, diuresis, vasodilation, and inhibiting aldosterone synthesis. In vitro, promotes the production of cGMP and induces vasodilation. May promote natriuresis, at least in part, by enhancing prostaglandin E2 synthesis resulting in the inhibition of renal Na+-K+-ATPase. However reports on the involvement of this peptide in mammal blood volume and blood pressure homeostasis are conflicting; according to a report, in vivo it is not sufficient to activate cGMP and does not inhibit collecting duct transport nor effect diuresis and natriuresis. Appears to bind to specific receptors that are distinct from the receptors bound by atrial natriuretic peptide and vessel dilator. Possibly enhances protein excretion in urine by decreasing proximal tubular protein reabsorption. Functionally, may have a role in cardio-renal homeostasis through regulation of natriuresis, diuresis, and vasodilation. In vitro, promotes the production of cGMP and induces vasodilation. May promote natriuresis, at least in part, by enhancing prostaglandin E2 synthesis resulting in the inhibition of renal Na+-K+-ATPase. However reports on the involvement of this peptide in mammal blood volume and blood pressure homeostasis are conflicting; according to a report it is not sufficient to activate cGMP and does not inhibit collecting duct transport nor effect diuresis and natriuresis. Appears to bind to specific receptors that are distinct from the receptors bound by the atrial natriuretic and long-acting natriuretic peptides. Possibly functions in protein excretion in urine by maintaining the integrity of the proximal tubules and enhancing protein excretion by decreasing proximal tubular protein reabsorption. In terms of biological role, may have a role in cardio-renal homeostasis through regulation of diuresis and inhibiting aldosterone synthesis. In vitro, promotes the production of cGMP and induces vasodilation. May promote natriuresis, at least in part, by enhancing prostaglandin E2 synthesis resulting in the inhibition of renal Na+-K+-ATPase. May have a role in potassium excretion but not sodium excretion (natriuresis). Possibly enhances protein excretion in urine by decreasing proximal tubular protein reabsorption. Its function is as follows. Hormone produced in the kidneys that appears to be important for maintaining cardio-renal homeostasis. Mediates vasodilation, natriuresis and diuresis primarily in the renal system, in order to maintain the extracellular fluid volume and control the fluid-electrolyte balance. Specifically binds and stimulates cGMP production by renal transmembrane receptors, likely NPR1. Urodilatin not ANP, may be the natriuretic peptide responsible for the regulation of sodium and water homeostasis in the kidney. May have a role in cardio-renal homeostasis through regulation of natriuresis and vasodilation. In vivo promotes natriuresis and in vitro, vasodilates renal artery strips. Functionally, may have a role in cardio-renal homeostasis through regulation of regulation of natriuresis and vasodilation. In vivo promotes natriuresis. In vitro, vasodilates intestinal smooth muscle but not smooth muscle strips. In terms of biological role, may have a role in cardio-renal homeostasis through regulation of natriuresis and vasodilation. In vivo promotes natriuresis. In vitro, selectively vasodilates intestinal and vascular smooth muscle strips. Its function is as follows. May have a role in cardio-renal homeostasis through regulation of natriuresis and vasodilation. In vivo promotes natriuresis. In vitro, selectively vasodilates intestinal smooth muscle but not vascular smooth muscle strips. The sequence is that of Natriuretic peptides A (NPPA) from Ovis aries (Sheep).